A 201-amino-acid chain; its full sequence is Putative Ras-related protein Rab-1C (201 aa).

Residues 15–23 (GDSGVGKSC), 33–40 (YTESYIST), and 63–67 (DTAGQ) contribute to the GTP site. The short motif at 37-45 (YISTIGVDF) is the Effector region element. Residue Ser-76 is modified to (Microbial infection) O-(2-cholinephosphoryl)serine. Residues 121–124 (NKSD) and 151–153 (SAK) contribute to the GTP site. A disordered region spans residues 174–201 (GPGAASGGERPNLKIDSTPVKPAGGGCC). 2 S-geranylgeranyl cysteine lipidation sites follow: Cys-200 and Cys-201.

Belongs to the small GTPase superfamily. Rab family. (Microbial infection) Phosphocholinated at Ser-76 by L.pneumophila AnkX, leading to displace GDP dissociation inhibitors (GDI). Both GDP-bound and GTP-bound forms can be phosphocholinated. Dephosphocholinated by L.pneumophila Lem3, restoring accessibility to L.pneumophila GTPase effector LepB. Post-translationally, (Microbial infection) Glycosylated by S.typhimurium protein Ssek3: arginine GlcNAcylation prevents GTPase activity, thereby disrupting vesicular protein transport from the endoplasmic reticulum (ER) to the Golgi compartment.

Its subcellular location is the membrane. It is found in the cytoplasm. The enzyme catalyses GTP + H2O = GDP + phosphate + H(+). Functionally, protein transport. Probably involved in vesicular traffic. The sequence is that of Putative Ras-related protein Rab-1C (RAB1C) from Homo sapiens (Human).